The chain runs to 135 residues: Interleukin-4 (135 aa).

The signal sequence occupies residues 1-24; the sequence is MGLTYQLIPVLVCLLVCTSHFAHG. Cystine bridges form between Cys-27–Cys-135, Cys-48–Cys-85, and Cys-70–Cys-105. N-linked (GlcNAc...) asparagine glycosylation is present at Asn-62.

The protein belongs to the IL-4/IL-13 family.

Its subcellular location is the secreted. Participates in at least several B-cell activation processes as well as of other cell types. It is a costimulator of DNA-synthesis. It induces the expression of class II MHC molecules on resting B-cells. It enhances both secretion and cell surface expression of IgE and IgG1. It also regulates the expression of the low affinity Fc receptor for IgE (CD23) on both lymphocytes and monocytes. Positively regulates IL31RA expression in macrophages. Stimulates autophagy in dendritic cells by interfering with mTORC1 signaling and through the induction of RUFY4. The chain is Interleukin-4 (IL4) from Boselaphus tragocamelus (Nilgai).